A 151-amino-acid polypeptide reads, in one-letter code: Ubiquitin-conjugating enzyme E2 2 (151 aa).

The UBC core domain occupies 4 to 150 (AARRRLMRDF…VRETVEKSWE (147 aa)). Catalysis depends on Cys88, which acts as the Glycyl thioester intermediate.

This sequence belongs to the ubiquitin-conjugating enzyme family.

It localises to the cytoplasm. The protein localises to the nucleus. The catalysed reaction is S-ubiquitinyl-[E1 ubiquitin-activating enzyme]-L-cysteine + [E2 ubiquitin-conjugating enzyme]-L-cysteine = [E1 ubiquitin-activating enzyme]-L-cysteine + S-ubiquitinyl-[E2 ubiquitin-conjugating enzyme]-L-cysteine.. It functions in the pathway protein modification; protein ubiquitination. Its function is as follows. Catalyzes the covalent attachment of ubiquitin to other proteins. Plays a role in transcription regulation by catalyzing the monoubiquitination of histone H2B to form H2BK123ub1. H2BK123ub1 gives a specific tag for epigenetic transcriptional activation and is also a prerequisite for H3K4me and H3K79me formation. Also involved in postreplication repair of UV-damaged DNA, in N-end rule-dependent protein degradation and in sporulation. The polypeptide is Ubiquitin-conjugating enzyme E2 2 (UBC2) (Fusarium solani (Filamentous fungus)).